Reading from the N-terminus, the 297-residue chain is Esterase LipU (297 aa).

Residues Ser140, Glu239, and His269 contribute to the active site.

Belongs to the 'GDXG' lipolytic enzyme family.

It is found in the secreted. The catalysed reaction is a fatty acid ester + H2O = an aliphatic alcohol + a fatty acid + H(+). It catalyses the reaction a butanoate ester + H2O = an aliphatic alcohol + butanoate + H(+). The enzyme catalyses an acetyl ester + H2O = an aliphatic alcohol + acetate + H(+). It carries out the reaction decanoate ester + H2O = decanoate + an aliphatic alcohol + H(+). The catalysed reaction is an octanoate ester + H2O = an aliphatic alcohol + octanoate + H(+). It catalyses the reaction a dodecanoate ester + H2O = an aliphatic alcohol + dodecanoate + H(+). The enzyme catalyses hexadecanoate ester + H2O = an aliphatic alcohol + hexadecanoate + H(+). Its activity is regulated as follows. Inhibited by the ionic detergent SDS and by the serine protease inhibitor PMSF. Inhibited by the FDA approved drugs Diosmin, Acarbose and Ouabain. These drugs remain bound in the active site pocket and could be probable drug candidates to combat TB disease. Esterase that shows preference for short chain fatty acids. Contributes to the growth of M.tuberculosis during the nutritive stress. Elicits strong humoral response in both extrapulmonary and relapsed cases of tuberculosis patients. This chain is Esterase LipU, found in Mycobacterium tuberculosis (strain ATCC 25618 / H37Rv).